Reading from the N-terminus, the 531-residue chain is Putative heme-binding protein HQ_1094A (531 aa).

Histidine 177 contributes to the heme binding site. The interval 269–340 (AHGEAHGHAH…STNTNTQDSE (72 aa)) is disordered. Over residues 271 to 281 (GEAHGHAHGDS) the composition is skewed to basic and acidic residues. Residues 284–306 (GSGGGGGSSHGQSPGGASAGGSA) show a composition bias toward gly residues. The segment covering 308-317 (GTEDADHSDS) has biased composition (basic and acidic residues). The segment covering 318–338 (RSTTSADTTQSDTSTNTNTQD) has biased composition (low complexity). Positions 441–529 (GTMGMFYTVK…VLSERPRHVF (89 aa)) constitute an ABM domain.

This sequence in the N-terminal section; belongs to the ChdC family.

The protein is Putative heme-binding protein HQ_1094A of Haloquadratum walsbyi (strain DSM 16790 / HBSQ001).